The sequence spans 215 residues: UPF0056 membrane protein bbp_248 (215 aa).

6 helical membrane passes run 10 to 32 (IYISFFFSLFALVNPIGMIPIFT), 52 to 74 (FSVAIILSISLIFGSFILNLFGI), 78 to 100 (SFRISGGILVMIIAISMINGNFI), 119 to 141 (ISIVPLAMPLIAGPGAISSTIVW), 151 to 169 (IFGCMVTIMLFSCFCWTLF), and 190 to 207 (IMGLLLMSLGIEFILAGL).

It belongs to the UPF0056 (MarC) family.

The protein localises to the cell membrane. The sequence is that of UPF0056 membrane protein bbp_248 from Buchnera aphidicola subsp. Baizongia pistaciae (strain Bp).